An 848-amino-acid chain; its full sequence is Adenylate cyclase (848 aa).

The catalytic stretch occupies residues 1 to 535; the sequence is MYLYIETLKQ…DISHHFPLRL (535 aa). The segment at 541 to 848 is regulatory; it reads KALYSPCEIR…SQPAQQFQLH (308 aa).

This sequence belongs to the adenylyl cyclase class-1 family.

It localises to the cytoplasm. It catalyses the reaction ATP = 3',5'-cyclic AMP + diphosphate. The regulatory domain is involved in the regulation of cyclase activity by the carbon source. This is Adenylate cyclase (cya) from Yersinia intermedia.